Reading from the N-terminus, the 254-residue chain is Chymotrypsin-like serine proteinase (254 aa).

The first 18 residues, 1 to 18 (MNALLNILLCTLAATALA), serve as a signal peptide directing secretion. A propeptide spans 19-23 (EISPN) (activation peptide). Positions 24–254 (IVGGSNAAAG…SSFYNWVQTQ (231 aa)) constitute a Peptidase S1 domain. Cysteine 53 and cysteine 69 form a disulfide bridge. Active-site charge relay system residues include histidine 68 and aspartate 117. 3 disulfide bridges follow: cysteine 146–cysteine 218, cysteine 181–cysteine 199, and cysteine 208–cysteine 233. Serine 212 (charge relay system) is an active-site residue.

Belongs to the peptidase S1 family. Monomer. In terms of tissue distribution, expressed specifically in the distal quarter of the intestine.

It is found in the secreted. It localises to the extracellular space. With respect to regulation, activated by an autocatalytic mechanism. Specificity similar to chymotrypsin. The chain is Chymotrypsin-like serine proteinase from Haliotis rufescens (California red abalone).